Reading from the N-terminus, the 142-residue chain is Hemoglobin subunit alpha-2 (142 aa).

The 141-residue stretch at 2 to 142 folds into the Globin domain; it reads VLSAADKTNV…VSTVLTSKYR (141 aa). Position 59 (His-59) interacts with O2. Position 88 (His-88) interacts with heme b.

Belongs to the globin family. Heterotetramer of two alpha chains and two beta chains. As to expression, red blood cells.

Its function is as follows. Involved in oxygen transport from the lung to the various peripheral tissues. Hemopressin acts as an antagonist peptide of the cannabinoid receptor CNR1. Hemopressin-binding efficiently blocks cannabinoid receptor CNR1 and subsequent signaling. The chain is Hemoglobin subunit alpha-2 (HBA2) from Equus quagga burchellii (Burchell's zebra).